The chain runs to 119 residues: Large ribosomal subunit protein uL18 (119 aa).

Belongs to the universal ribosomal protein uL18 family. Part of the 50S ribosomal subunit; part of the 5S rRNA/L5/L18/L25 subcomplex. Contacts the 5S and 23S rRNAs.

Its function is as follows. This is one of the proteins that bind and probably mediate the attachment of the 5S RNA into the large ribosomal subunit, where it forms part of the central protuberance. The chain is Large ribosomal subunit protein uL18 from Anaeromyxobacter dehalogenans (strain 2CP-C).